A 42-amino-acid polypeptide reads, in one-letter code: Delta-hexatoxin-Ar1a (42 aa).

Disulfide bonds link cysteine 1–cysteine 15, cysteine 8–cysteine 20, cysteine 14–cysteine 31, and cysteine 16–cysteine 42.

It belongs to the neurotoxin 06 (delta-actx) family. In terms of tissue distribution, expressed by the venom gland.

The protein localises to the secreted. Functionally, inhibits tetrodotoxin-sensitive voltage-gated sodium channels (Nav) by binding to site 3. It slows the inactivation, causes a prolongation of action potential duration resulting in repetitive firing in autonomic and motor nerve fibers. Does not depolarize the resting potential. Does not affect tetrodotoxin-resistant sodium channels. This lethal neurotoxin is active on both insect and mammalian voltage-gated sodium channels. The polypeptide is Delta-hexatoxin-Ar1a (Atrax robustus (Sydney funnel-web spider)).